Consider the following 393-residue polypeptide: Acyltransferase ato1 (393 aa).

The protein belongs to the lysine N-acyltransferase mbtK family.

It participates in siderophore biosynthesis; ferrichrome biosynthesis. Functionally, L-ornithine N(5)-monooxygenase; part of the siderophore biosynthetic pathway. Omphalotus olearius produces ferrichrome A, but no other siderophore has been detected. Ferrichrome A consists of a hexapeptide ring made up of one glycine, two serine, and three N(5)-hydroxyornithine amino acid residues, the latter acylated by trans-(alpha-methyl)-glutaconic acid residues. The biosynthesis of ferrichrome A depends on the hydroxylation of ornithine to N(5)-hydroxyornithine, catalyzed by the monooxygenase omo1. The second step, the acylation of N(5)-hydroxy-L-ornithine is probably catalyzed by the N-acyltransferase ato1. Finally, assembly of ferrichrome A is catalyzed by the nonribosomal peptide synthase (NRPS) fso1. This Omphalotus olearius (Jack o'lantern) protein is Acyltransferase ato1.